Here is a 1296-residue protein sequence, read N- to C-terminus: Phosphoribosylformylglycinamidine synthase (1296 aa).

Residues 300-325 form a disordered region; the sequence is APFSGAATGSGGEIRDEGATGRGSKP. ATP contacts are provided by residues 304–315 and Ala-675; that span reads GAATGSGGEIRD. Mg(2+) contacts are provided by Glu-715, Asn-719, and Asp-885. ATP is bound at residue Ser-887. Positions 1043-1296 constitute a Glutamine amidotransferase type-1 domain; sequence MAILREQGVN…MFRNARKNVG (254 aa). Cys-1136 (nucleophile) is an active-site residue. Positions 1232–1253 are disordered; that stretch reads TQYPANPNGSPEGITGITSTDG. Active-site residues include His-1261 and Glu-1263.

It in the N-terminal section; belongs to the FGAMS family. As to quaternary structure, monomer.

It is found in the cytoplasm. It carries out the reaction N(2)-formyl-N(1)-(5-phospho-beta-D-ribosyl)glycinamide + L-glutamine + ATP + H2O = 2-formamido-N(1)-(5-O-phospho-beta-D-ribosyl)acetamidine + L-glutamate + ADP + phosphate + H(+). It participates in purine metabolism; IMP biosynthesis via de novo pathway; 5-amino-1-(5-phospho-D-ribosyl)imidazole from N(2)-formyl-N(1)-(5-phospho-D-ribosyl)glycinamide: step 1/2. Its function is as follows. Phosphoribosylformylglycinamidine synthase involved in the purines biosynthetic pathway. Catalyzes the ATP-dependent conversion of formylglycinamide ribonucleotide (FGAR) and glutamine to yield formylglycinamidine ribonucleotide (FGAM) and glutamate. This Pseudoalteromonas translucida (strain TAC 125) protein is Phosphoribosylformylglycinamidine synthase.